A 262-amino-acid polypeptide reads, in one-letter code: Large ribosomal subunit protein eL8B (262 aa).

A disordered region spans residues 1–36 (MAPKGKKVAPAPLATKSAKSSESKNPLFESTPKNFG).

It belongs to the eukaryotic ribosomal protein eL8 family. As to quaternary structure, component of the large ribosomal subunit. Mature ribosomes consist of a small (40S) and a large (60S) subunit. The 40S subunit contains about 32 different proteins and 1 molecule of RNA (18S). The 60S subunit contains 45 different proteins and 3 molecules of RNA (25S, 5.8S and 5S).

It localises to the cytoplasm. Component of the ribosome, a large ribonucleoprotein complex responsible for the synthesis of proteins in the cell. The small ribosomal subunit (SSU) binds messenger RNAs (mRNAs) and translates the encoded message by selecting cognate aminoacyl-transfer RNA (tRNA) molecules. The large subunit (LSU) contains the ribosomal catalytic site termed the peptidyl transferase center (PTC), which catalyzes the formation of peptide bonds, thereby polymerizing the amino acids delivered by tRNAs into a polypeptide chain. The nascent polypeptides leave the ribosome through a tunnel in the LSU and interact with protein factors that function in enzymatic processing, targeting, and the membrane insertion of nascent chains at the exit of the ribosomal tunnel. The sequence is that of Large ribosomal subunit protein eL8B from Candida albicans (strain SC5314 / ATCC MYA-2876) (Yeast).